Reading from the N-terminus, the 152-residue chain is Aspartate 1-decarboxylase (152 aa).

The active-site Schiff-base intermediate with substrate; via pyruvic acid is the Ser-24. The residue at position 24 (Ser-24) is a Pyruvic acid (Ser). Thr-56 contributes to the substrate binding site. The Proton donor role is filled by Tyr-57. Residue 72-74 participates in substrate binding; that stretch reads GAA.

This sequence belongs to the PanD family. Heterooctamer of four alpha and four beta subunits. Pyruvate is required as a cofactor. Post-translationally, is synthesized initially as an inactive proenzyme, which is activated by self-cleavage at a specific serine bond to produce a beta-subunit with a hydroxyl group at its C-terminus and an alpha-subunit with a pyruvoyl group at its N-terminus.

The protein resides in the cytoplasm. It carries out the reaction L-aspartate + H(+) = beta-alanine + CO2. The protein operates within cofactor biosynthesis; (R)-pantothenate biosynthesis; beta-alanine from L-aspartate: step 1/1. Catalyzes the pyruvoyl-dependent decarboxylation of aspartate to produce beta-alanine. This is Aspartate 1-decarboxylase from Rhodospirillum centenum (strain ATCC 51521 / SW).